The following is a 386-amino-acid chain: Oxysterol-binding protein-related protein 4A (386 aa).

It belongs to the OSBP family. In terms of tissue distribution, expressed in roots, stems and flowers.

Its function is as follows. May be involved in the transport of sterols. The polypeptide is Oxysterol-binding protein-related protein 4A (ORP4A) (Arabidopsis thaliana (Mouse-ear cress)).